The sequence spans 220 residues: Adapter protein MecA (220 aa).

Belongs to the MecA family. As to quaternary structure, homodimer.

Functionally, enables the recognition and targeting of unfolded and aggregated proteins to the ClpC protease or to other proteins involved in proteolysis. In Macrococcus caseolyticus (strain JCSC5402) (Macrococcoides caseolyticum), this protein is Adapter protein MecA.